We begin with the raw amino-acid sequence, 365 residues long: DNA replication and repair protein RecF (365 aa).

An ATP-binding site is contributed by 30–37 (GPNGSGKT).

This sequence belongs to the RecF family.

Its subcellular location is the cytoplasm. The RecF protein is involved in DNA metabolism; it is required for DNA replication and normal SOS inducibility. RecF binds preferentially to single-stranded, linear DNA. It also seems to bind ATP. The sequence is that of DNA replication and repair protein RecF from Azotobacter vinelandii (strain DJ / ATCC BAA-1303).